The chain runs to 193 residues: Peptidyl-tRNA hydrolase (193 aa).

A tRNA-binding site is contributed by Tyr16. His21 functions as the Proton acceptor in the catalytic mechanism. TRNA contacts are provided by Phe67, Asn69, and Asn115.

The protein belongs to the PTH family. In terms of assembly, monomer.

Its subcellular location is the cytoplasm. The catalysed reaction is an N-acyl-L-alpha-aminoacyl-tRNA + H2O = an N-acyl-L-amino acid + a tRNA + H(+). In terms of biological role, hydrolyzes ribosome-free peptidyl-tRNAs (with 1 or more amino acids incorporated), which drop off the ribosome during protein synthesis, or as a result of ribosome stalling. Functionally, catalyzes the release of premature peptidyl moieties from peptidyl-tRNA molecules trapped in stalled 50S ribosomal subunits, and thus maintains levels of free tRNAs and 50S ribosomes. The protein is Peptidyl-tRNA hydrolase of Vesicomyosocius okutanii subsp. Calyptogena okutanii (strain HA).